Here is a 371-residue protein sequence, read N- to C-terminus: Collectin-46 (371 aa).

The first 20 residues, 1–20 (MLLLPLSVLLLLTQPWRSLG), serve as a signal peptide directing secretion. Residues 43–215 (PEGGLPGRDG…ERGAKGESGL (173 aa)) form a disordered region. The Collagen-like domain maps to 46–216 (GLPGRDGQDG…RGAKGESGLA (171 aa)). Over residues 51–65 (DGQDGREGPQGEKGD) the composition is skewed to basic and acidic residues. Residue N90 is glycosylated (N-linked (GlcNAc...) asparagine). Residues 113–128 (PAGREGPSGKQGSMGP) are compositionally biased toward low complexity. Over residues 139-148 (GPKGGMGAPG) the composition is skewed to gly residues. The span at 170–191 (APGSAGVAGPAGAIGPQGPSGA) shows a compositional bias: low complexity. Over residues 198 to 210 (KGDRGDPGERGAK) the composition is skewed to basic and acidic residues. A Cell attachment site motif is present at residues 201 to 203 (RGD). The C-type lectin domain occupies 273-371 (QLCREAKGQL…SEPLLVICEF (99 aa)). 2 disulfide bridges follow: C275–C369 and C347–C361.

The protein belongs to the SFTPD family. Oligomeric complex of 4 set of homotrimers. In terms of processing, hydroxylated. As to expression, highly expressed in thymus and liver.

Its subcellular location is the secreted. The sequence is that of Collectin-46 (CL46) from Bos taurus (Bovine).